Here is a 46-residue protein sequence, read N- to C-terminus: uncharacterized protein (46 aa).

This is an uncharacterized protein from Dictyostelium discoideum (Social amoeba).